Here is a 181-residue protein sequence, read N- to C-terminus: Oligoribonuclease (181 aa).

Residues 8-171 (LIWIDLEMTG…QDIQESIAEL (164 aa)) form the Exonuclease domain. Residue tyrosine 129 is part of the active site.

The protein belongs to the oligoribonuclease family.

Its subcellular location is the cytoplasm. 3'-to-5' exoribonuclease specific for small oligoribonucleotides. This chain is Oligoribonuclease, found in Shewanella oneidensis (strain ATCC 700550 / JCM 31522 / CIP 106686 / LMG 19005 / NCIMB 14063 / MR-1).